Reading from the N-terminus, the 339-residue chain is MTTIALDAMGGDHGPKVVVPAALDSLEQNPSLRLVLVGDESVLREYLKDTRRRFGDRLRVHHASEVVEMHDQPSKALRNKKDSSMRVAIDLVKQGDADACVSAGNTGALMAIAKFVLKTLPGIDRPAIIAAVPSMTGHTHVLDLGANVDCTAEHLYQFAVMGYELVRAVEEREHPTVGLLNIGEEEIKGNEQVKRAAELLSGAHVNFVGFVEGDDIFKGSVDIVVTDGFVGNVALKSSEGLAKMISHFIKREFSSSLLTRLAGLIALPVLNAFKHRIDPRQYNGASLLGLRGIVIKSHGNADRFSFANAVTIAVKEVEKAVPHRIGERMTDVFAARNLA.

The protein belongs to the PlsX family. As to quaternary structure, homodimer. Probably interacts with PlsY.

Its subcellular location is the cytoplasm. It catalyses the reaction a fatty acyl-[ACP] + phosphate = an acyl phosphate + holo-[ACP]. It participates in lipid metabolism; phospholipid metabolism. In terms of biological role, catalyzes the reversible formation of acyl-phosphate (acyl-PO(4)) from acyl-[acyl-carrier-protein] (acyl-ACP). This enzyme utilizes acyl-ACP as fatty acyl donor, but not acyl-CoA. This chain is Phosphate acyltransferase, found in Methylococcus capsulatus (strain ATCC 33009 / NCIMB 11132 / Bath).